The sequence spans 450 residues: Deoxyguanosinetriphosphate triphosphohydrolase-like protein (450 aa).

Residues 61–274 (RLTHSLEVAQ…MELADDIAYA (214 aa)) form the HD domain.

Belongs to the dGTPase family. Type 2 subfamily.

This Histophilus somni (strain 2336) (Haemophilus somnus) protein is Deoxyguanosinetriphosphate triphosphohydrolase-like protein.